The primary structure comprises 652 residues: Aspartate--tRNA ligase, mitochondrial (652 aa).

A mitochondrion-targeting transit peptide spans 1-46 (MYLGSWLNRLGRGLSRPIGKTKQPIWGSLSRSLTLSSQRVPEFSSF). Thr-218 carries the phosphothreonine modification. The residue at position 241 (Ser-241) is a Phosphoserine. Residues 243–246 (QQFK) are aspartate. Residue Arg-265 participates in L-aspartate binding. ATP contacts are provided by residues 265–267 (RDE) and Glu-534. Residue Arg-541 participates in L-aspartate binding. ATP is bound at residue 583–586 (GLDR).

This sequence belongs to the class-II aminoacyl-tRNA synthetase family. Type 1 subfamily. In terms of assembly, homodimer.

The protein localises to the mitochondrion matrix. Its subcellular location is the mitochondrion membrane. It carries out the reaction tRNA(Asp) + L-aspartate + ATP = L-aspartyl-tRNA(Asp) + AMP + diphosphate. Its function is as follows. Catalyzes the attachment of aspartate to tRNA(Asp) in a two-step reaction: aspartate is first activated by ATP to form Asp-AMP and then transferred to the acceptor end of tRNA(Asp). The chain is Aspartate--tRNA ligase, mitochondrial (Dars2) from Rattus norvegicus (Rat).